We begin with the raw amino-acid sequence, 232 residues long: 2,3,4,5-tetrahydropyridine-2,6-dicarboxylate N-acetyltransferase (232 aa).

Belongs to the transferase hexapeptide repeat family. DapH subfamily.

The catalysed reaction is (S)-2,3,4,5-tetrahydrodipicolinate + acetyl-CoA + H2O = L-2-acetamido-6-oxoheptanedioate + CoA. Its pathway is amino-acid biosynthesis; L-lysine biosynthesis via DAP pathway; LL-2,6-diaminopimelate from (S)-tetrahydrodipicolinate (acetylase route): step 1/3. In terms of biological role, catalyzes the transfer of an acetyl group from acetyl-CoA to tetrahydrodipicolinate. The protein is 2,3,4,5-tetrahydropyridine-2,6-dicarboxylate N-acetyltransferase of Streptococcus thermophilus (strain CNRZ 1066).